We begin with the raw amino-acid sequence, 1105 residues long: Mediator of RNA polymerase II transcription subunit 14 (1105 aa).

Positions 28-48 are disordered; the sequence is ASQQANGGIYRNGIGKKSHSP.

The protein belongs to the Mediator complex subunit 14 family. As to quaternary structure, component of the Mediator complex.

The protein resides in the nucleus. Its function is as follows. Component of the Mediator complex, a coactivator involved in the regulated transcription of nearly all RNA polymerase II-dependent genes. Mediator functions as a bridge to convey information from gene-specific regulatory proteins to the basal RNA polymerase II transcription machinery. Mediator is recruited to promoters by direct interactions with regulatory proteins and serves as a scaffold for the assembly of a functional preinitiation complex with RNA polymerase II and the general transcription factors. This Coccidioides immitis (strain RS) (Valley fever fungus) protein is Mediator of RNA polymerase II transcription subunit 14 (RGR1).